We begin with the raw amino-acid sequence, 185 residues long: Large ribosomal subunit protein uL5 (185 aa).

Belongs to the universal ribosomal protein uL5 family. In terms of assembly, part of the 50S ribosomal subunit; part of the 5S rRNA/L5/L18/L25 subcomplex. Contacts the 5S rRNA and the P site tRNA. Forms a bridge to the 30S subunit in the 70S ribosome.

This is one of the proteins that bind and probably mediate the attachment of the 5S RNA into the large ribosomal subunit, where it forms part of the central protuberance. In the 70S ribosome it contacts protein S13 of the 30S subunit (bridge B1b), connecting the 2 subunits; this bridge is implicated in subunit movement. Contacts the P site tRNA; the 5S rRNA and some of its associated proteins might help stabilize positioning of ribosome-bound tRNAs. This Rhodopseudomonas palustris (strain HaA2) protein is Large ribosomal subunit protein uL5.